The chain runs to 315 residues: PIH1 domain-containing protein 2 (315 aa).

The protein belongs to the PIH1 family.

In Homo sapiens (Human), this protein is PIH1 domain-containing protein 2 (PIH1D2).